Consider the following 877-residue polypeptide: Probable Ras GTPase-activating-like protein ngap (877 aa).

One can recognise a C2 domain in the interval 72-218 (TPSATYESLI…KDQKERELWF (147 aa)). Residues 350–456 (SDDGDISGLK…ETINLSSSIN (107 aa)) are disordered. The span at 389-409 (TTATTTPSSTPSTPISPSSQS) shows a compositional bias: low complexity. Over residues 410–425 (NNIKTPDSKTRSSSNA) the composition is skewed to polar residues. Low complexity-rich tracts occupy residues 426 to 438 (STNT…KSTG) and 447 to 456 (ETINLSSSIN). One can recognise a Ras-GAP domain in the interval 591-802 (GKCLYLLKSL…ENMKSFINTL (212 aa)). The stretch at 820–848 (LEKELACLYRHLIKQRQDMAEEMESTESE) forms a coiled coil.

May function as a Ras GTPase-activating protein. This Dictyostelium discoideum (Social amoeba) protein is Probable Ras GTPase-activating-like protein ngap (ngap).